We begin with the raw amino-acid sequence, 1100 residues long: Tyrosine-protein kinase JAK3 (1100 aa).

A cytokine/interferon/growth hormone receptors region spans residues 1 to 223 (MAPPSEETPL…RRTVVQALRR (223 aa)). S17 carries the post-translational modification Phosphoserine. The region spanning 24–353 (GALHVLLPPR…GYFRLICDSR (330 aa)) is the FERM domain. An SH2; atypical domain is found at 372 to 472 (LCHGPITLDF…GTALNLTSCC (101 aa)). The Protein kinase 1 domain occupies 517-777 (LEWHENLGHG…AILRDLNGLI (261 aa)). Y781 carries the post-translational modification Phosphotyrosine; by autocatalysis. One can recognise a Protein kinase 2 domain in the interval 818 to 1091 (LKYISLLGKG…PAFDTLSPQL (274 aa)). Residues 824–832 (LGKGNFGSV) and K851 contribute to the ATP site. Residues Y900 and Y935 each carry the phosphotyrosine modification. D945 acts as the Proton acceptor in catalysis. A phosphotyrosine; by autocatalysis mark is found at Y976 and Y977.

It belongs to the protein kinase superfamily. Tyr protein kinase family. JAK subfamily. As to quaternary structure, interacts with STAM2 and MYO18A. Interacts with SHB. Interacts with CD69. Autophosphorylated, leading to regulate its activity. IL2 promotes phosphorylation on tyrosine residues, including autophosphorylation on Tyr-781. Dephosphorylation of Tyr-976 and Tyr-977 by PTPN2 negatively regulates cytokine-mediated signaling. In contrast with the ubiquitous expression of the other JAKs, JAK3 is predominantly expressed in hematopoietic tissues.

It is found in the endomembrane system. The protein localises to the cytoplasm. It carries out the reaction L-tyrosyl-[protein] + ATP = O-phospho-L-tyrosyl-[protein] + ADP + H(+). In terms of biological role, non-receptor tyrosine kinase involved in various processes such as cell growth, development, or differentiation. Mediates essential signaling events in both innate and adaptive immunity and plays a crucial role in hematopoiesis during T-cells development. In the cytoplasm, plays a pivotal role in signal transduction via its association with type I receptors sharing the common subunit gamma such as IL2R, IL4R, IL7R, IL9R, IL15R and IL21R. Following ligand binding to cell surface receptors, phosphorylates specific tyrosine residues on the cytoplasmic tails of the receptor, creating docking sites for STATs proteins. Subsequently, phosphorylates the STATs proteins once they are recruited to the receptor. Phosphorylated STATs then form homodimer or heterodimers and translocate to the nucleus to activate gene transcription. For example, upon IL2R activation by IL2, JAK1 and JAK3 molecules bind to IL2R beta (IL2RB) and gamma chain (IL2RG) subunits inducing the tyrosine phosphorylation of both receptor subunits on their cytoplasmic domain. Then, STAT5A and STAT5B are recruited, phosphorylated and activated by JAK1 and JAK3. Once activated, dimerized STAT5 translocates to the nucleus and promotes the transcription of specific target genes in a cytokine-specific fashion. This chain is Tyrosine-protein kinase JAK3, found in Rattus norvegicus (Rat).